The sequence spans 502 residues: Alpha-globin transcription factor CP2 (502 aa).

Residues 61 to 300 (ENKILPFQYV…SPGFNSSHSS (240 aa)) enclose the Grh/CP2 DB domain. The interval 133–395 (EHQQLEGWRW…VRPRLTIYVC (263 aa)) is DNA-binding. 2 disordered regions span residues 238–268 (FKPK…YQPS) and 294–325 (FNSS…DNLL). Over residues 241 to 265 (KGADRKQKTDREKMEKRTPHEKEKY) the composition is skewed to basic and acidic residues. The residue at position 353 (serine 353) is a Phosphoserine.

It belongs to the grh/CP2 family. CP2 subfamily. Binds to DNA as a dimer, isoform 3 does not bind to DNA or affect the binding of isoform 1 to DNA. Interacts with UBP1 and PIAS1, and is probably part of a complex containing TFCP2, UBP1 and PIAS1. Component of the SSP (stage selector protein) complex, which appears to be a heteromer of TFCP2 and 2 copies of NFE4. In terms of tissue distribution, ubiquitous. Expressed in brain, ovary, kidney, thymus, spleen, liver, adrenal, heart and lung (at protein level).

The protein localises to the nucleus. Binds a variety of cellular and viral promoters including fibrinogen, alpha-globin, SV40 and HIV-1 promoters. Activation of the alpha-globin promoter in erythroid cells is via synergistic interaction with UBP1. Functions as part of the SSP (stage selector protein) complex. Facilitates the interaction of the gamma-globin genes with enhancer elements contained in the locus control region in fetal erythroid cells. Interacts by binding to the stage selector element (SSE) in the proximal gamma-globin promoter. The protein is Alpha-globin transcription factor CP2 (TFCP2) of Homo sapiens (Human).